Consider the following 700-residue polypeptide: Auxin response factor 18 (700 aa).

The segment at residues 128–230 is a DNA-binding region (TF-B3); it reads FAKTLTQSDA…DLCVGIRRAK (103 aa). Disordered regions lie at residues 234 to 254 and 560 to 595; these read VGGP…AAGG and VKKS…DNLS. A compositionally biased stretch (pro residues) spans 239–250; the sequence is FLPPPPPPPPTP. Residues 565–594 show a composition bias toward polar residues; that stretch reads SDGNAENTVNKSNSDVSSPRSNQNGTTDNL. Residues 614–697 enclose the PB1 domain; that stretch reads TGHCKVFMQS…NILTDTSGDN (84 aa).

It belongs to the ARF family. In terms of assembly, homodimers and heterodimers. Expressed in roots, culms, leaves and young panicles.

It localises to the nucleus. Functionally, auxin response factors (ARFs) are transcriptional factors that bind specifically to the DNA sequence 5'-TGTCTC-3' found in the auxin-responsive promoter elements (AuxREs). The protein is Auxin response factor 18 (ARF18) of Oryza sativa subsp. japonica (Rice).